A 279-amino-acid chain; its full sequence is MGLLSADLLITLQILPVFFSNCLFLALYDSVILLKHMVLFLSRSKSARGEWRRMLTSEGLRCVWNSFLLDAYKQVKLGGEAPNSSVIHIAKGNDGSNSSWKSVGGKCGTKCHLLDFANSERPLVVNFGSATUPPFTSQLSAFSKLVEEFSGVADFLLVYIDEAHPSDGWAAPGISPSSFEVKKHRNQEDRCAAAHQLLERFSLPPQCQVVADCMDNNANVAYGVSFERVCIVQRQKIAYLGGKGPFFYNLQEVRLWLEQNFSKRUNPLSTEDLSTDVSL.

Over 1–7 (MGLLSAD) the chain is Lumenal. A helical; Signal-anchor for type III membrane protein membrane pass occupies residues 8–28 (LLITLQILPVFFSNCLFLALY). Topologically, residues 29 to 279 (DSVILLKHMV…TEDLSTDVSL (251 aa)) are cytoplasmic. Residue Sec132 is part of the active site. Non-standard amino acids (selenocysteine) are located at Sec132 and Sec265.

It belongs to the iodothyronine deiodinase family. In terms of assembly, predominantly monomer. Can form homodimers but homodimerization is not essential for enzyme activity. In terms of tissue distribution, highly expressed in liver and in various parts of the brain including telencephalon, hippocampus, cerebellum, and brain stem, and weakly expressed in thyroid, lung, and small intestine. Not detected in skeletal muscle, heart atria or ventricle, gizzard or kidney.

It localises to the endoplasmic reticulum membrane. It carries out the reaction 3,3',5-triiodo-L-thyronine + iodide + A + H(+) = L-thyroxine + AH2. The enzyme catalyses 3,3'-diiodo-L-thyronine + iodide + A + H(+) = 3,3',5'-triiodo-L-thyronine + AH2. The catalysed reaction is 3'-iodo-L-thyronine + iodide + A + H(+) = 3',5'-diiodo-L-thyronine + AH2. It catalyses the reaction 3,3'-diiodothyronamine + iodide + A + H(+) = 3,3',5'-triiodothyronamine + AH2. It carries out the reaction 3'-iodothyronamine + iodide + A + H(+) = 3',5'-diiodothyronamine + AH2. Not inhibited by N(6)-propylthiouracil. Its function is as follows. Plays a crucial role in the metabolism of thyroid hormones (TH) and has specific roles in TH activation and inactivation by deiodination. Catalyzes the deiodination of L-thyroxine (T4) to 3,5,3'-triiodothyronine (T3) and 3,3',5'-triiodothyronine (rT3) to 3,3'-diiodothyronine (3,3'-T2) via outer-ring deiodination (ORD). Catalyzes the deiodination of 3',5'-diiodothyronine (3',5'-T2) to 3'-monoiodothyronine (3'-T1) via ORD. Catalyzes the phenolic ring deiodinations of 3,3',5'-triiodothyronamine and 3',5'- diiodothyronamine. The polypeptide is Type II iodothyronine deiodinase (DIO2) (Gallus gallus (Chicken)).